The primary structure comprises 563 residues: Serine palmitoyltransferase 3 (563 aa).

Over residues 1–29 (MANLNDSAVTNGTLHNPKTQQGKRQSTGC) the composition is skewed to polar residues. The tract at residues 1–32 (MANLNDSAVTNGTLHNPKTQQGKRQSTGCVKN) is disordered. A helical transmembrane segment spans residues 59-79 (PLYVYVLTYMGYGIGILFGYL). Residue lysine 371 is modified to N6-(pyridoxal phosphate)lysine.

Belongs to the class-II pyridoxal-phosphate-dependent aminotransferase family. Component of the serine palmitoyltransferase (SPT) complex, which is composed of SPTLC1, SPTLC2 or SPTLC3 and SPTSSA or SPTSSB. The heterodimer consisting of SPTLC1 and SPTLC2/SPTLC3 forms the catalytic core of the enzyme, while SPTSSA or SPTSSB subunits determine substrate specificity. SPT also interacts with ORMDL proteins, especially ORMDL3, which negatively regulate SPT activity in the presence of ceramides. It depends on pyridoxal 5'-phosphate as a cofactor. As to expression, expressed in white and brown adipose tissues.

The protein resides in the endoplasmic reticulum membrane. The enzyme catalyses L-serine + hexadecanoyl-CoA + H(+) = 3-oxosphinganine + CO2 + CoA. It carries out the reaction dodecanoyl-CoA + L-serine + H(+) = 3-oxotetradecasphinganine + CO2 + CoA. The catalysed reaction is tetradecanoyl-CoA + L-serine + H(+) = 3-oxohexadecasphinganine + CO2 + CoA. It catalyses the reaction octadecanoyl-CoA + L-serine + H(+) = 3-oxoeicosasphinganine + CO2 + CoA. The protein operates within lipid metabolism; sphingolipid metabolism. With respect to regulation, SPT complex catalytic activity is negatively regulated by ORMDL proteins, including ORMDL3, in the presence of ceramides. This mechanism allows to maintain ceramide levels at sufficient concentrations for the production of complex sphingolipids, but which prevents the accumulation of ceramides to levels that trigger apoptosis. Functionally, component of the serine palmitoyltransferase multisubunit enzyme (SPT) that catalyzes the initial and rate-limiting step in sphingolipid biosynthesis by condensing L-serine and activated acyl-CoA (most commonly palmitoyl-CoA) to form long-chain bases. The SPT complex is composed of SPTLC1, SPTLC2 or SPTLC3 and SPTSSA or SPTSSB. Within this complex, the heterodimer consisting of SPTLC1 and SPTLC2/SPTLC3 forms the catalytic core. The composition of the serine palmitoyltransferase (SPT) complex determines the substrate preference. The SPTLC1-SPTLC2-SPTSSA complex shows a strong preference for C16-CoA substrate, while the SPTLC1-SPTLC3-SPTSSA isozyme uses both C14-CoA and C16-CoA as substrates, with a slight preference for C14-CoA. The SPTLC1-SPTLC2-SPTSSB complex shows a strong preference for C18-CoA substrate, while the SPTLC1-SPTLC3-SPTSSB isozyme displays an ability to use a broader range of acyl-CoAs, without apparent preference. In Mus musculus (Mouse), this protein is Serine palmitoyltransferase 3.